A 146-amino-acid chain; its full sequence is Flavodoxin (146 aa).

A Flavodoxin-like domain is found at 4–143 (SLIVYGSTTG…EIVSWGSGIA (140 aa)).

It belongs to the flavodoxin family. It depends on FMN as a cofactor.

Low-potential electron donor to a number of redox enzymes. The sequence is that of Flavodoxin from Maridesulfovibrio salexigens (strain ATCC 14822 / DSM 2638 / NCIMB 8403 / VKM B-1763) (Desulfovibrio salexigens).